A 104-amino-acid chain; its full sequence is MAAKIRRDDEVIVLTGKDKGKRGKVKNVLSASKVIVEGINLVKKHQKPVPALNQPGGIVEKEAAIQVSNVAIFNAATGKADRVGFRFEDGKKVRFFKSNSETIK.

This sequence belongs to the universal ribosomal protein uL24 family. In terms of assembly, part of the 50S ribosomal subunit.

One of two assembly initiator proteins, it binds directly to the 5'-end of the 23S rRNA, where it nucleates assembly of the 50S subunit. Functionally, one of the proteins that surrounds the polypeptide exit tunnel on the outside of the subunit. This Pectobacterium carotovorum subsp. carotovorum (strain PC1) protein is Large ribosomal subunit protein uL24.